Here is a 1358-residue protein sequence, read N- to C-terminus: DNA mismatch repair protein Msh6 (1358 aa).

The disordered stretch occupies residues 1–87; sequence MSRQSTLYSF…SSAQAVPPSS (87 aa). Phosphoserine occurs at positions 14, 38, and 40. Residues 25 to 46 are compositionally biased toward low complexity; sequence AEASRQGAAASGASASRGGDAA. Lysine 67 carries the post-translational modification N6-acetyllysine. Over residues 76–87 the composition is skewed to low complexity; sequence ASSSAQAVPPSS. Phosphoserine is present on residues serine 91, serine 137, serine 200, serine 219, and serine 227. Positions 92 to 154 constitute a PWWP domain; that stretch reads PGDLVWAKME…KRMLKPYTGS (63 aa). The tract at residues 197-360 is disordered; that stretch reads DEPSEPEEEE…VSGGGNDSSG (164 aa). 2 stretches are compositionally biased toward acidic residues: residues 198-209 and 219-231; these read EPSEPEEEEETE and SEED…EEEA. The segment covering 240–249 has biased composition (basic residues); it reads RSSRQVKKRR. Residues serine 252, serine 254, serine 256, and serine 261 each carry the phosphoserine modification. A compositionally biased stretch (basic and acidic residues) spans 263 to 273; that stretch reads VEFKPDTKQEG. The residue at position 269 (threonine 269) is a Phosphothreonine. Residues serine 274, serine 275, serine 279, and serine 280 each carry the phosphoserine modification. A compositionally biased stretch (polar residues) spans 329-351; the sequence is LSETKSTLSAFSAPQNSESQTHV. At threonine 487 the chain carries Phosphothreonine. Lysine 503 bears the N6-acetyllysine mark. Phosphoserine is present on residues serine 827 and serine 932. Threonine 1007 bears the Phosphothreonine mark. Position 1132–1139 (1132–1139) interacts with ATP; the sequence is GPNMGGKS.

The protein belongs to the DNA mismatch repair MutS family. As to quaternary structure, component of the DNA mismatch repair (MMR) complex composed at least of MSH2, MSH3, MSH6, PMS1 and MLH1. Heterodimer consisting of MSH2-MSH6 (MutS alpha). Forms a ternary complex with MutL alpha (MLH1-PMS1). Interacts with MCM9. Part of the BRCA1-associated genome surveillance complex (BASC), which contains BRCA1, MSH2, MSH6, MLH1, ATM, BLM, PMS2 and the RAD50-MRE11-NBS1 protein complex. This association could be a dynamic process changing throughout the cell cycle and within subnuclear domains. Post-translationally, phosphorylated by PRKCZ, which may prevent MutS alpha degradation by the ubiquitin-proteasome pathway.

Its subcellular location is the nucleus. It is found in the chromosome. In terms of biological role, component of the post-replicative DNA mismatch repair system (MMR). Heterodimerizes with MSH2 to form MutS alpha, which binds to DNA mismatches thereby initiating DNA repair. When bound, MutS alpha bends the DNA helix and shields approximately 20 base pairs, and recognizes single base mismatches and dinucleotide insertion-deletion loops (IDL) in the DNA. After mismatch binding, forms a ternary complex with the MutL alpha heterodimer, which is thought to be responsible for directing the downstream MMR events, including strand discrimination, excision, and resynthesis. ATP binding and hydrolysis play a pivotal role in mismatch repair functions. The ATPase activity associated with MutS alpha regulates binding similar to a molecular switch: mismatched DNA provokes ADP--&gt;ATP exchange, resulting in a discernible conformational transition that converts MutS alpha into a sliding clamp capable of hydrolysis-independent diffusion along the DNA backbone. This transition is crucial for mismatch repair. MutS alpha may also play a role in DNA homologous recombination repair. Recruited on chromatin in G1 and early S phase via its PWWP domain that specifically binds trimethylated 'Lys-36' of histone H3 (H3K36me3): early recruitment to chromatin to be replicated allowing a quick identification of mismatch repair to initiate the DNA mismatch repair reaction. The protein is DNA mismatch repair protein Msh6 of Mus musculus (Mouse).